The primary structure comprises 350 residues: Ion-translocating oxidoreductase complex subunit D (350 aa).

5 helical membrane passes run 20–40 (VMVLVILCLIPGVFLQSYFFG), 44–64 (LIQISLACLAALASEAFILKI), 68–88 (PVLNTLKDASALLTAILLAIS), 89–109 (IPPLAPWWIVVIGTIFAIIFV), and 125–145 (MAGYVLLLISFPVQMTSWLPV). At Thr-187 the chain carries FMN phosphoryl threonine. 5 helical membrane-spanning segments follow: residues 215 to 235 (SWQQIYWINGAFLAGGLILLF), 241 to 261 (WHIPMSFLLGIGIFSFIAFAY), 267 to 287 (APPLFHLFSGATMLGAFFILS), 300 to 320 (ILYALLIAFIVVIIRNVGGYP), and 322 to 342 (AVAFAVLLGNMCVPLIDYYTQ).

It belongs to the NqrB/RnfD family. In terms of assembly, the complex is composed of six subunits: RnfA, RnfB, RnfC, RnfD, RnfE and RnfG. Requires FMN as cofactor.

It localises to the cell inner membrane. Functionally, part of a membrane-bound complex that couples electron transfer with translocation of ions across the membrane. In Psychromonas ingrahamii (strain DSM 17664 / CCUG 51855 / 37), this protein is Ion-translocating oxidoreductase complex subunit D.